The sequence spans 181 residues: Inner membrane-spanning protein YciB (181 aa).

Transmembrane regions (helical) follow at residues Leu-10 to Ile-30, Met-50 to Asp-70, Ile-80 to Ile-100, Trp-120 to Leu-140, and Phe-148 to Ile-168.

It belongs to the YciB family.

It localises to the cell inner membrane. Its function is as follows. Plays a role in cell envelope biogenesis, maintenance of cell envelope integrity and membrane homeostasis. The sequence is that of Inner membrane-spanning protein YciB from Vibrio cholerae serotype O1 (strain ATCC 39315 / El Tor Inaba N16961).